We begin with the raw amino-acid sequence, 220 residues long: Deoxyribose-phosphate aldolase 2 (220 aa).

Asp89 serves as the catalytic Proton donor/acceptor. The Schiff-base intermediate with acetaldehyde role is filled by Lys151. Catalysis depends on Lys180, which acts as the Proton donor/acceptor.

Belongs to the DeoC/FbaB aldolase family. DeoC type 1 subfamily.

The protein resides in the cytoplasm. It catalyses the reaction 2-deoxy-D-ribose 5-phosphate = D-glyceraldehyde 3-phosphate + acetaldehyde. Its pathway is carbohydrate degradation; 2-deoxy-D-ribose 1-phosphate degradation; D-glyceraldehyde 3-phosphate and acetaldehyde from 2-deoxy-alpha-D-ribose 1-phosphate: step 2/2. Catalyzes a reversible aldol reaction between acetaldehyde and D-glyceraldehyde 3-phosphate to generate 2-deoxy-D-ribose 5-phosphate. This Staphylococcus aureus (strain N315) protein is Deoxyribose-phosphate aldolase 2.